The chain runs to 463 residues: ATP-dependent protease ATPase subunit HslU (463 aa).

Residues isoleucine 19, 61 to 66, aspartate 277, glutamate 341, and arginine 413 contribute to the ATP site; that span reads GVGKTE.

This sequence belongs to the ClpX chaperone family. HslU subfamily. In terms of assembly, a double ring-shaped homohexamer of HslV is capped on each side by a ring-shaped HslU homohexamer. The assembly of the HslU/HslV complex is dependent on binding of ATP.

It localises to the cytoplasm. Its function is as follows. ATPase subunit of a proteasome-like degradation complex; this subunit has chaperone activity. The binding of ATP and its subsequent hydrolysis by HslU are essential for unfolding of protein substrates subsequently hydrolyzed by HslV. HslU recognizes the N-terminal part of its protein substrates and unfolds these before they are guided to HslV for hydrolysis. This is ATP-dependent protease ATPase subunit HslU from Bacillus anthracis (strain A0248).